A 274-amino-acid polypeptide reads, in one-letter code: MTHVFEVYPKVNVFLKILHKEGAYHKIISRMCLVKNKLKDIISVKNALSFSLKGDFDCPLEENSLFKALQVLKKFLVQKNFSHSVIKSLDTLAIEVEKNIPTQAGLGGGSADAGGLLYHLNQMFDWRLSLKELYTMGSLVGADTNFFISQYKSANATSYGEVIENFEEESLEDRLEIYAPNHVFCSTKAVYQAYKPETCFFQAKEWLKKTSLECLKTYDRNELNDLLKPALRTNPALKDIESQLSKEWFFSGSGSAFFRLKNTQKGANETHCQQ.

Lysine 10 is a catalytic residue. Residue 101–111 (PTQAGLGGGSA) participates in ATP binding. Residue aspartate 143 is part of the active site.

It belongs to the GHMP kinase family. IspE subfamily.

The catalysed reaction is 4-CDP-2-C-methyl-D-erythritol + ATP = 4-CDP-2-C-methyl-D-erythritol 2-phosphate + ADP + H(+). It functions in the pathway isoprenoid biosynthesis; isopentenyl diphosphate biosynthesis via DXP pathway; isopentenyl diphosphate from 1-deoxy-D-xylulose 5-phosphate: step 3/6. Catalyzes the phosphorylation of the position 2 hydroxy group of 4-diphosphocytidyl-2C-methyl-D-erythritol. This Helicobacter pylori (strain J99 / ATCC 700824) (Campylobacter pylori J99) protein is 4-diphosphocytidyl-2-C-methyl-D-erythritol kinase.